A 111-amino-acid polypeptide reads, in one-letter code: Irditoxin subunit B (111 aa).

A signal peptide spans 1-19; the sequence is MKTLLLAVAVVAFVCLGSA. A propeptide spanning residues 20-34 is cleaved from the precursor; it reads DQLGLGRQQIDWGKG. Pyrrolidone carboxylic acid is present on glutamine 35. 5 disulfides stabilise this stretch: cysteine 44–cysteine 68, cysteine 47–cysteine 55, cysteine 61–cysteine 87, cysteine 91–cysteine 102, and cysteine 103–cysteine 108.

The protein belongs to the three-finger toxin family. Ancestral subfamily. Boigatoxin sub-subfamily. Heterodimer of A and B chains; disulfide-linked. In terms of tissue distribution, expressed by the venom gland.

The protein localises to the secreted. This bird and reptile-specific postsynaptic neurotoxin inhibits the chick muscle alpha-1-beta-1-gamma-delta (CHRNA1-CHRNB1-CHRNG-CHRND) nicotinic acetylcholine receptor (nAChR) 100-fold more compared with the mouse receptor. In vivo, produces rapid flaccid paralysis, dyspnea and increased respiratory rate in geckos. At sublethal doses geckos were immobilized for up to three days and then recovered. Chicks injected with lethal doses showed rapid onset of inactivity, dyspnea and neck droop, and no extended paralysis with survival was seen. This is Irditoxin subunit B from Boiga irregularis (Brown tree snake).